The primary structure comprises 256 residues: uncharacterized protein (256 aa).

The next 4 helical transmembrane spans lie at 5-25 (FIEGFETIWTVVRAVVLNYLL), 30-50 (ILSTILYVSAVISWNVSLKVF), 64-84 (VVIFILRIVSLFLWILADPAI), and 105-125 (VGITLYPLYVLLSWAVFLGII). The disordered stretch occupies residues 198 to 256 (EKTKSLDSISHSSSSSRKSSTELKIPPVETRIVAEIPVPSSVKRRRHRPNKSMGSIKNS). Residues 203–215 (LDSISHSSSSSRK) are compositionally biased toward low complexity. A phosphoserine mark is found at Ser210 and Ser211.

The protein resides in the endoplasmic reticulum membrane. The protein localises to the nucleus membrane. This is an uncharacterized protein from Schizosaccharomyces pombe (strain 972 / ATCC 24843) (Fission yeast).